A 93-amino-acid chain; its full sequence is Small ribosomal subunit protein uS19 (93 aa).

This sequence belongs to the universal ribosomal protein uS19 family.

In terms of biological role, protein S19 forms a complex with S13 that binds strongly to the 16S ribosomal RNA. The chain is Small ribosomal subunit protein uS19 from Limosilactobacillus fermentum (strain NBRC 3956 / LMG 18251) (Lactobacillus fermentum).